A 1506-amino-acid chain; its full sequence is Phosphatidylinositol 3-kinase C2 domain-containing subunit gamma (1506 aa).

The interval 1 to 34 is disordered; it reads MAYSWQTEPNRTEPQEDGSDTQQFHHTNQHLSSR. Positions 20 to 34 are enriched in polar residues; it reads DTQQFHHTNQHLSSR. The 87-residue stretch at 285–371 folds into the PI3K-RBD domain; it reads DTKFRVKISI…IQLHLQKNRD (87 aa). Residues 541 to 689 form the C2 PI3K-type domain; sequence LQSHLSFTVC…SPLTLQIDFP (149 aa). In terms of domain architecture, PIK helical spans 704 to 880; sequence RTDHEEPPRE…QELLAALQFC (177 aa). Positions 949–1227 constitute a PI3K/PI4K catalytic domain; it reads DRDACSYFTS…KIKESLECFP (279 aa). Residues 955–961 are G-loop; that stretch reads YFTSNAS. Positions 1091-1099 are catalytic loop; sequence GVCDRHNDN. The tract at residues 1110–1136 is activation loop; sequence HIDFGKFLGHAQTFGGIKRDRAPFIFT. Residues 1260 to 1372 enclose the PX domain; that stretch reads LNKTRTIQRV…SFFLSEHIQP (113 aa). The 126-residue stretch at 1381-1506 folds into the C2 domain; the sequence is DPGENSLDKS…KWYPLGNSII (126 aa).

Belongs to the PI3/PI4-kinase family. In terms of tissue distribution, expressed predominantly in liver. Also found in kidney, lung and lymphoid tissue. Down-regulated in BeF3 cells expressing the BCR-ABL oncogene p185.

It is found in the membrane. It catalyses the reaction a 1,2-diacyl-sn-glycero-3-phospho-(1D-myo-inositol 4-phosphate) + ATP = a 1,2-diacyl-sn-glycero-3-phospho-(1D-myo-inositol-3,4-bisphosphate) + ADP + H(+). The enzyme catalyses a 1,2-diacyl-sn-glycero-3-phospho-(1D-myo-inositol) + ATP = a 1,2-diacyl-sn-glycero-3-phospho-(1D-myo-inositol-3-phosphate) + ADP + H(+). Its function is as follows. Generates phosphatidylinositol 3-phosphate (PtdIns3P) and phosphatidylinositol 3,4-bisphosphate (PtdIns(3,4)P2) that act as second messengers. May play a role in SDF1A-stimulated chemotaxis. In Mus musculus (Mouse), this protein is Phosphatidylinositol 3-kinase C2 domain-containing subunit gamma (Pik3c2g).